An 860-amino-acid polypeptide reads, in one-letter code: Transforming growth factor-beta receptor-associated protein 1 (860 aa).

Residues 24-297 (HISIECVECC…HILQDFEGRV (274 aa)) form the CNH domain. One copy of the CHCR repeat lies at 564 to 732 (RPLDEQQQTS…YLRAGPSAQD (169 aa)).

Belongs to the TRAP1 family. In terms of assembly, interacts with TGFBR2 and ACVR2B; in the absence of ligand stimulation. Interacts with TGFBR1, ACVRL1, BMPR1A and ACVR1B; in the absence of ligand stimulation and to a less extent. Interacts with SMAD4; the interaction seems to be mutually exclusive with the interaction of SMAD4 and phosphorylated SMAD2. May interact with ALOX5. Interacts with RAB5C. Interacts with VPS8, VPS11 and VPS16. Component of the putative class C core vacuole/endosome tethering (CORVET) complex; the core of which composed of the class C Vps proteins VPS11, VPS16, VPS18 and VPS33A, is associated with VPS8 and TGFBRAP1.

It localises to the cytoplasm. Its subcellular location is the early endosome. Its function is as follows. Plays a role in the TGF-beta/activin signaling pathway. It associates with inactive heteromeric TGF-beta and activin receptor complexes, mainly through the type II receptor, and is released upon activation of signaling. May recruit SMAD4 to the vicinity of the receptor complex and facilitate its interaction with receptor-regulated Smads, such as SMAD2. Plays a role in vesicle-mediated protein trafficking of the endocytic membrane transport pathway. Believed to act as a component of the putative CORVET endosomal tethering complexes which is proposed to be involved in the Rab5-to-Rab7 endosome conversion probably implicating MON1A/B, and via binding SNAREs and SNARE complexes to mediate tethering and docking events during SNARE-mediated membrane fusion. The CORVET complex is proposed to function as a Rab5 effector to mediate early endosome fusion probably in specific endosome subpopulations. Functions predominantly in APPL1-containing endosomes and in degradative but not recycling trafficking of endocytosed cargo. This chain is Transforming growth factor-beta receptor-associated protein 1 (Tgfbrap1), found in Mus musculus (Mouse).